The primary structure comprises 354 residues: Methylthioribose-1-phosphate isomerase (354 aa).

Substrate-binding positions include 58 to 60 (RGA), Arg-101, and Gln-204. Asp-245 (proton donor) is an active-site residue. Residue 255–256 (NK) coordinates substrate.

Belongs to the eIF-2B alpha/beta/delta subunits family. MtnA subfamily.

The catalysed reaction is 5-(methylsulfanyl)-alpha-D-ribose 1-phosphate = 5-(methylsulfanyl)-D-ribulose 1-phosphate. It functions in the pathway amino-acid biosynthesis; L-methionine biosynthesis via salvage pathway; L-methionine from S-methyl-5-thio-alpha-D-ribose 1-phosphate: step 1/6. In terms of biological role, catalyzes the interconversion of methylthioribose-1-phosphate (MTR-1-P) into methylthioribulose-1-phosphate (MTRu-1-P). This is Methylthioribose-1-phosphate isomerase from Xanthomonas campestris pv. campestris (strain ATCC 33913 / DSM 3586 / NCPPB 528 / LMG 568 / P 25).